A 166-amino-acid chain; its full sequence is NAD(P)H-quinone oxidoreductase subunit I, chloroplastic (166 aa).

4Fe-4S ferredoxin-type domains are found at residues 55 to 84 and 95 to 124; these read GRIHFEFDKCIACEVCVRVCPIDLPVVDWK and LNYSIDFGICIFCGNCVEYCPTNCLSMTEE. Residues C64, C67, C70, C74, C104, C107, C110, and C114 each contribute to the [4Fe-4S] cluster site.

This sequence belongs to the complex I 23 kDa subunit family. As to quaternary structure, NDH is composed of at least 16 different subunits, 5 of which are encoded in the nucleus. [4Fe-4S] cluster is required as a cofactor.

The protein localises to the plastid. It is found in the chloroplast thylakoid membrane. The catalysed reaction is a plastoquinone + NADH + (n+1) H(+)(in) = a plastoquinol + NAD(+) + n H(+)(out). The enzyme catalyses a plastoquinone + NADPH + (n+1) H(+)(in) = a plastoquinol + NADP(+) + n H(+)(out). Its function is as follows. NDH shuttles electrons from NAD(P)H:plastoquinone, via FMN and iron-sulfur (Fe-S) centers, to quinones in the photosynthetic chain and possibly in a chloroplast respiratory chain. The immediate electron acceptor for the enzyme in this species is believed to be plastoquinone. Couples the redox reaction to proton translocation, and thus conserves the redox energy in a proton gradient. This is NAD(P)H-quinone oxidoreductase subunit I, chloroplastic from Oteiza scandens (Climbing oteiza).